A 729-amino-acid polypeptide reads, in one-letter code: Serine/threonine-protein kinase TBK1 (729 aa).

The Protein kinase domain maps to 9–310 (WLLSDILGQG…ETSDVLHRMV (302 aa)). 15-23 (LGQGATANV) contributes to the ATP binding site. K30 is covalently cross-linked (Glycyl lysine isopeptide (Lys-Gly) (interchain with G-Cter in ubiquitin)). K38 contacts ATP. Residue D135 is the Proton acceptor of the active site. A Phosphoserine; by autocatalysis and IKKB modification is found at S172. The region spanning 309–385 (MVIHVFSLQH…ENPIFVTSRE (77 aa)) is the Ubiquitin-like domain. K401 is covalently cross-linked (Glycyl lysine isopeptide (Lys-Gly) (interchain with G-Cter in ubiquitin)). 2 coiled-coil regions span residues 407-657 (DLDG…LQET) and 658-713 (LPQK…ILER). Residues 621–729 (RKMLHLRKQL…DGGLRNVDCL (109 aa)) are interaction with AZI2, TANK and TBKBP1. K670 participates in a covalent cross-link: Glycyl lysine isopeptide (Lys-Gly) (interchain with G-Cter in ubiquitin). S716 carries the phosphoserine modification.

This sequence belongs to the protein kinase superfamily. Ser/Thr protein kinase family. I-kappa-B kinase subfamily. In terms of assembly, homodimer. Interacts with DDX3X, TIRAP and TRAF2. Part of a ternary complex consisting of TANK, TRAF2 and TBK1. Interacts with AZI2, TANK and TBKBP1; these interactions are mutually exclusive and mediate TBK1 activation. Interacts with GSK3B; this interaction promotes TBK1 self-association and autophosphorylation. Interacts with SIKE1; SIKE1 is associated with TBK1 under physiological condition and dissociated from TBK1 upon viral infection or TLR3 stimulation. Interacts with IRF3, leading to IRF3 phosphorylation. Interacts with RIGI. Interacts with CYLD. Interacts with OPTN and TRAF3. Interacts with SRC. Interacts with the exocyst complex subunit SEC5/EXOC2; this interaction is sufficient to trigger TBK1 activity. Interacts with STING1, leading to STING1 phosphorylation. Interacts with IFIT3 (via N-terminus). Interacts with MAVS; interaction only takes place in the presence of IFIT3 and leads to MAVS phosphorylation. Interacts (via protein kinase domain) with TTLL12 (via TTL domain); the interaction prevents MAVS binding to TBK1. Interacts with TICAM1; this interaction is enhanced in the presence of WDFY1 and leads to TICAM1 phosphorylation. Interacts with TRIM26. Interacts with TRIM23. Interacts with TTC4 and IKBKE. Interacts with HNRNPA2B1. Interacts with DDX3X. Interacts with TRIM14. Interacts with CEP170; efficient complex formation may be dependent on the presence of CCDC61. Interacts with TRAF3IP3. Interacts with HSP90AA1; the interaction mediates TBK1 association with TOMM70. Interacts with TAX1BP1. Interacts with kinase IKBKB; the complex interacts with STAT1, leading to phosphorylation of STAT1 on 'Thr-748' by IKBKB. Interacts with ICOS; this interaction is critical for the maturation of T follicular regulatory cells. Interacts with RNF144B; this interaction prevents TBK1 phosphorylation and subsequent activation. Interacts with ASB8; this interaction promotes TBK1 proteasomal degradation. In terms of processing, autophosphorylation at Ser-172 activates the kinase, and is an essential step for virus-triggered signaling. Phosphorylated by IKBKB/IKKB at Ser-172. Phosphorylation requires homodimerization and ubiquitination at Lys-30 and Lys-401. Dephosphorylated at Ser-172 by PPM1B and this negatively regulates its role in mediating antiviral response. 'Lys-63'-linked polyubiquitination by MIB1 after RNA virus infection, or by NRDP1 after LPS stimulation at Lys-30 and Lys-401, participates in kinase activation. 'Lys-48'-linked polyubiquitination at Lys-670 by DTX4 leads to proteasomal degradation. 'Lys-48'-linked polyubiquitination by TRAIP also leads to proteasomal degradation. 'Lys-48'-linked polyubiquitination by TRAF7; leading to proteasomal degradation. 'Lys-63'-linked polyubiquitination by RNF128 at Lys-30 and Lys-401 leads to the activation of antiviral responses. 'Lys-48'-linked polyubiquitination after 'lys-33'-linked deubiquitination by USP38 promotes TBK1 degradation.

It is found in the cytoplasm. The catalysed reaction is L-seryl-[protein] + ATP = O-phospho-L-seryl-[protein] + ADP + H(+). The enzyme catalyses L-threonyl-[protein] + ATP = O-phospho-L-threonyl-[protein] + ADP + H(+). Kinase activity is inhibited competitively by amlexanox. Serine/threonine kinase that plays an essential role in regulating inflammatory responses to foreign agents. Following activation of toll-like receptors by viral or bacterial components, associates with TRAF3 and TANK and phosphorylates interferon regulatory factors (IRFs) IRF3 and IRF7 as well as DDX3X. This activity allows subsequent homodimerization and nuclear translocation of the IRFs leading to transcriptional activation of pro-inflammatory and antiviral genes including IFNA and IFNB. In order to establish such an antiviral state, TBK1 form several different complexes whose composition depends on the type of cell and cellular stimuli. Thus, several scaffolding molecules including FADD, TRADD, MAVS, AZI2, TANK or TBKBP1/SINTBAD can be recruited to the TBK1-containing-complexes. Plays a key role in IRF3 activation: acts by first phosphorylating innate adapter proteins MAVS, STING1 and TICAM1 on their pLxIS motif, leading to recruitment of IRF3, thereby licensing IRF3 for phosphorylation by TBK1. Under particular conditions, functions as a NF-kappa-B effector by phosphorylating NF-kappa-B inhibitor alpha/NFKBIA, IKBKB or RELA to translocate NF-Kappa-B to the nucleus. Restricts bacterial proliferation by phosphorylating the autophagy receptor OPTN/Optineurin on 'Ser-177', thus enhancing LC3 binding affinity and antibacterial autophagy. Phosphorylates SMCR8 component of the C9orf72-SMCR8 complex, promoting autophagosome maturation. Phosphorylates ATG8 proteins MAP1LC3C and GABARAPL2, thereby preventing their delipidation and premature removal from nascent autophagosomes. Seems to play a role in energy balance regulation by sustaining a state of chronic, low-grade inflammation in obesity, which leads to a negative impact on insulin sensitivity. Acts both as a positive and negative regulator of the mTORC1 complex, depending on the context: activates mTORC1 in response to growth factors by catalyzing phosphorylation of MTOR, while it limits the mTORC1 complex by promoting phosphorylation of RPTOR. Acts as a positive regulator of the mTORC2 complex by mediating phosphorylation of MTOR, leading to increased phosphorylation and activation of AKT1. Phosphorylates and activates AKT1. Involved in the regulation of TNF-induced RIPK1-mediated cell death, probably acting via CYLD phosphorylation that in turn controls RIPK1 ubiquitination status. Also participates in the differentiation of T follicular regulatory cells together with the receptor ICOS. The protein is Serine/threonine-protein kinase TBK1 of Mus musculus (Mouse).